Reading from the N-terminus, the 279-residue chain is Thymidylate synthase (279 aa).

132 to 133 (RR) provides a ligand contact to dUMP. The Nucleophile role is filled by Cys-153. DUMP contacts are provided by residues 178–181 (RSND), Asn-189, and 219–221 (HIY). Asp-181 provides a ligand contact to (6R)-5,10-methylene-5,6,7,8-tetrahydrofolate. Residue Ala-278 coordinates (6R)-5,10-methylene-5,6,7,8-tetrahydrofolate.

This sequence belongs to the thymidylate synthase family. Bacterial-type ThyA subfamily. As to quaternary structure, homodimer.

The protein resides in the cytoplasm. It catalyses the reaction dUMP + (6R)-5,10-methylene-5,6,7,8-tetrahydrofolate = 7,8-dihydrofolate + dTMP. Its pathway is pyrimidine metabolism; dTTP biosynthesis. Functionally, catalyzes the reductive methylation of 2'-deoxyuridine-5'-monophosphate (dUMP) to 2'-deoxythymidine-5'-monophosphate (dTMP) while utilizing 5,10-methylenetetrahydrofolate (mTHF) as the methyl donor and reductant in the reaction, yielding dihydrofolate (DHF) as a by-product. This enzymatic reaction provides an intracellular de novo source of dTMP, an essential precursor for DNA biosynthesis. In Lactococcus lactis subsp. cremoris (strain SK11), this protein is Thymidylate synthase.